The chain runs to 2389 residues: Highly reducing polyketide synthase Dhc3 (2389 aa).

Positions 9–433 (DVPIAVVGLA…GTNGHAVLES (425 aa)) constitute a Ketosynthase family 3 (KS3) domain. Active-site for beta-ketoacyl synthase activity residues include cysteine 181, histidine 316, and histidine 356. The tract at residues 551 to 861 (FVFTGQGAQW…LSGPVEQILN (311 aa)) is malonyl-CoA:ACP transacylase (MAT) domain. The active-site For malonyltransferase activity is the serine 641. The tract at residues 944–1079 (RSLIGAQVPM…GLITIDYADT (136 aa)) is N-terminal hotdog fold. The PKS/mFAS DH domain occupies 944-1263 (RSLIGAQVPM…VSELENDTEA (320 aa)). A dehydratase (DH) domain region spans residues 946–1262 (LIGAQVPMMD…RVSELENDTE (317 aa)). The Proton acceptor; for dehydratase activity role is filled by histidine 976. Residues 1107 to 1263 (PDICSKEDFY…VSELENDTEA (157 aa)) are C-terminal hotdog fold. Aspartate 1173 serves as the catalytic Proton donor; for dehydratase activity. Residues 1673-1987 (GLLDTLAFIE…QGKHRGKLVL (315 aa)) are enoylreductase (ER) domain. The interval 2011-2191 (ATYLFVGGLG…VAVDLGIMRD (181 aa)) is catalytic ketoreductase (KRc) domain. Positions 2302–2379 (EAVSIITDAL…EFAEKIAEKS (78 aa)) constitute a Carrier domain. Serine 2339 carries the post-translational modification O-(pantetheine 4'-phosphoryl)serine.

It functions in the pathway mycotoxin biosynthesis. Functionally, highly reducing polyketide synthase; part of the gene cluster that mediates the biosynthesis of 10,11-dehydrocurvularin, a prevalent fungal phytotoxin with heat shock response and immune-modulatory activities. The highly reducing polyketide synthase Dhc3 is responsible for biosynthesis up to the tetraketide stage. The non-reducing polyketide synthase Dhc5 then conducts four additional chain extension cycles, producing the unreduced part of the nascent octaketide from C-1 to C-8 in 10,11-dehydrocurvularin. The polypeptide is Highly reducing polyketide synthase Dhc3 (Dhc3) (Alternaria cinerariae).